A 234-amino-acid chain; its full sequence is Leucyl/phenylalanyl-tRNA--protein transferase (234 aa).

This sequence belongs to the L/F-transferase family.

It localises to the cytoplasm. It catalyses the reaction N-terminal L-lysyl-[protein] + L-leucyl-tRNA(Leu) = N-terminal L-leucyl-L-lysyl-[protein] + tRNA(Leu) + H(+). The enzyme catalyses N-terminal L-arginyl-[protein] + L-leucyl-tRNA(Leu) = N-terminal L-leucyl-L-arginyl-[protein] + tRNA(Leu) + H(+). It carries out the reaction L-phenylalanyl-tRNA(Phe) + an N-terminal L-alpha-aminoacyl-[protein] = an N-terminal L-phenylalanyl-L-alpha-aminoacyl-[protein] + tRNA(Phe). In terms of biological role, functions in the N-end rule pathway of protein degradation where it conjugates Leu, Phe and, less efficiently, Met from aminoacyl-tRNAs to the N-termini of proteins containing an N-terminal arginine or lysine. The sequence is that of Leucyl/phenylalanyl-tRNA--protein transferase from Citrobacter koseri (strain ATCC BAA-895 / CDC 4225-83 / SGSC4696).